An 820-amino-acid polypeptide reads, in one-letter code: DNA mismatch repair protein MutS (820 aa).

618–625 contacts ATP; that stretch reads GPNMAGKS.

This sequence belongs to the DNA mismatch repair MutS family.

This protein is involved in the repair of mismatches in DNA. It is possible that it carries out the mismatch recognition step. This protein has a weak ATPase activity. The protein is DNA mismatch repair protein MutS of Chlamydia trachomatis serovar A (strain ATCC VR-571B / DSM 19440 / HAR-13).